Consider the following 1938-residue polypeptide: Autophagy-related protein 2 homolog A (1938 aa).

One can recognise a Chorein N-terminal domain in the interval 14-111; the sequence is ERVCRYLLHH…QLTLQPRRGP (98 aa). Residues serine 765, serine 878, serine 892, serine 894, serine 1266, serine 1301, and serine 1309 each carry the phosphoserine modification. The segment at 1242-1272 is disordered; sequence DLHPPPRPPSPTEIAGQKLSESPASLPSCPP. Residues 1315 to 1359 are disordered; that stretch reads LFPGERSGAPPPSPPVGGPAGSLGSCSEEKEDEREEEGDGDTLDS. Residues 1343-1359 are compositionally biased toward acidic residues; the sequence is EKEDEREEEGDGDTLDS. Positions 1358–1404 are WIPI-interacting; sequence DSDEFCILDAPGLGIPPRDGEPVVTQLHPGPIVVRDGYFSRPIGSTD. The residue at position 1402 (serine 1402) is a Phosphoserine. Disordered stretches follow at residues 1438-1476 and 1614-1657; these read PHPG…GSGR and GETS…PSPP. Over residues 1446-1464 the composition is skewed to low complexity; it reads TGLSGPRSSPSRCSGPNRP.

Belongs to the ATG2 family. As to quaternary structure, interacts with ATG9A (via C-terminus). Interacts (via WIPI-interacting region) with WDR45B/WIPI3. Interacts (via WIPI-interacting region) with WDR45/WIPI4. Interacts with TMEM41B. Interacts with VMP1.

It is found in the preautophagosomal structure membrane. The protein resides in the lipid droplet. It localises to the endoplasmic reticulum membrane. It carries out the reaction a 1,2-diacyl-sn-glycero-3-phospho-L-serine(in) = a 1,2-diacyl-sn-glycero-3-phospho-L-serine(out). The catalysed reaction is a 1,2-diacyl-sn-glycero-3-phosphoethanolamine(in) = a 1,2-diacyl-sn-glycero-3-phosphoethanolamine(out). Functionally, lipid transfer protein involved in autophagosome assembly. Tethers the edge of the isolation membrane (IM) to the endoplasmic reticulum (ER) and mediates direct lipid transfer from ER to IM for IM expansion. Binds to the ER exit site (ERES), which is the membrane source for autophagosome formation, and extracts phospholipids from the membrane source and transfers them to ATG9 (ATG9A or ATG9B) to the IM for membrane expansion. Lipid transfer activity is enhanced by WIPI1 and WDR45/WIPI4, which promote ATG2A-association with phosphatidylinositol 3-monophosphate (PI3P)-containing membranes. Also regulates lipid droplets morphology and distribution within the cell. The protein is Autophagy-related protein 2 homolog A of Homo sapiens (Human).